The chain runs to 664 residues: DNA ligase (664 aa).

NAD(+) contacts are provided by residues Asp32 to Asp36 and Ser80 to Leu81. Lys122 functions as the N6-AMP-lysine intermediate in the catalytic mechanism. Residues Arg144, Glu178, and Lys314 each contribute to the NAD(+) site. 4 residues coordinate Zn(2+): Cys407, Cys410, Cys423, and Cys429. The region spanning Ile587 to Lys664 is the BRCT domain.

Belongs to the NAD-dependent DNA ligase family. LigA subfamily. Mg(2+) serves as cofactor. Requires Mn(2+) as cofactor.

The enzyme catalyses NAD(+) + (deoxyribonucleotide)n-3'-hydroxyl + 5'-phospho-(deoxyribonucleotide)m = (deoxyribonucleotide)n+m + AMP + beta-nicotinamide D-nucleotide.. DNA ligase that catalyzes the formation of phosphodiester linkages between 5'-phosphoryl and 3'-hydroxyl groups in double-stranded DNA using NAD as a coenzyme and as the energy source for the reaction. It is essential for DNA replication and repair of damaged DNA. This is DNA ligase from Clostridium botulinum (strain ATCC 19397 / Type A).